The chain runs to 458 residues: ATP-dependent protease ATPase subunit HslU (458 aa).

Residues V18, 60-65 (GVGKTE), D270, E335, and R407 contribute to the ATP site.

It belongs to the ClpX chaperone family. HslU subfamily. In terms of assembly, a double ring-shaped homohexamer of HslV is capped on each side by a ring-shaped HslU homohexamer. The assembly of the HslU/HslV complex is dependent on binding of ATP.

It localises to the cytoplasm. ATPase subunit of a proteasome-like degradation complex; this subunit has chaperone activity. The binding of ATP and its subsequent hydrolysis by HslU are essential for unfolding of protein substrates subsequently hydrolyzed by HslV. HslU recognizes the N-terminal part of its protein substrates and unfolds these before they are guided to HslV for hydrolysis. The chain is ATP-dependent protease ATPase subunit HslU from Desulfitobacterium hafniense (strain DSM 10664 / DCB-2).